The following is a 180-amino-acid chain: MSRIGNRLLQIPNGVEVKIAENNLVTITGSKGTLSKQFSPLIKIEVEENKLITKRLNEQKHTKQLHGTTNSLLQGMLTGVSEGFKKELQITGVGYKAAVNGSKLNLSLGYSHPVEFEIPDGVVIQAVKPTELAITGIDKQLVGQVAANIRAYRKPEPYKGKGIKYKNETIIRKEGKAAGK.

This sequence belongs to the universal ribosomal protein uL6 family. Part of the 50S ribosomal subunit.

Functionally, this protein binds to the 23S rRNA, and is important in its secondary structure. It is located near the subunit interface in the base of the L7/L12 stalk, and near the tRNA binding site of the peptidyltransferase center. The sequence is that of Large ribosomal subunit protein uL6 from Mycoplasma capricolum subsp. capricolum (strain California kid / ATCC 27343 / NCTC 10154).